The chain runs to 572 residues: Urease subunit alpha (572 aa).

The Urease domain maps to 134–572 (GGIDSHIHFI…LPLTQRYFLF (439 aa)). The Ni(2+) site is built by His-139, His-141, and Lys-222. Lys-222 bears the N6-carboxylysine mark. His-224 lines the substrate pocket. The Ni(2+) site is built by His-251 and His-277. The active-site Proton donor is the His-325. Asp-365 provides a ligand contact to Ni(2+).

It belongs to the metallo-dependent hydrolases superfamily. Urease alpha subunit family. As to quaternary structure, heterotrimer of UreA (gamma), UreB (beta) and UreC (alpha) subunits. Three heterotrimers associate to form the active enzyme. Requires Ni cation as cofactor. In terms of processing, carboxylation allows a single lysine to coordinate two nickel ions.

Its subcellular location is the cytoplasm. It catalyses the reaction urea + 2 H2O + H(+) = hydrogencarbonate + 2 NH4(+). It functions in the pathway nitrogen metabolism; urea degradation; CO(2) and NH(3) from urea (urease route): step 1/1. The chain is Urease subunit alpha from Variovorax paradoxus (strain S110).